A 283-amino-acid chain; its full sequence is Bifunctional protein FolD (283 aa).

NADP(+)-binding positions include 163–165 (GRS), Ser-188, and Ile-229.

Belongs to the tetrahydrofolate dehydrogenase/cyclohydrolase family. As to quaternary structure, homodimer.

It catalyses the reaction (6R)-5,10-methylene-5,6,7,8-tetrahydrofolate + NADP(+) = (6R)-5,10-methenyltetrahydrofolate + NADPH. It carries out the reaction (6R)-5,10-methenyltetrahydrofolate + H2O = (6R)-10-formyltetrahydrofolate + H(+). It functions in the pathway one-carbon metabolism; tetrahydrofolate interconversion. Functionally, catalyzes the oxidation of 5,10-methylenetetrahydrofolate to 5,10-methenyltetrahydrofolate and then the hydrolysis of 5,10-methenyltetrahydrofolate to 10-formyltetrahydrofolate. The polypeptide is Bifunctional protein FolD (Campylobacter fetus subsp. fetus (strain 82-40)).